A 363-amino-acid polypeptide reads, in one-letter code: MEPGAAELYDQALLGILQHVGNVQDFLRVLFGFLYRKTDFYRLLRHPSDRMGFPPGAAQALVLQVFKTFDHMARQDDEKRKKELEEKIRKKEEEAKALPAAETEKVAVPVPVQEVEIDAAADLSGPQEVEKEEPPGSQDPEHTVTHGLEKAEAPGTVSSAAEGPKDPPVLPRIQEQFQKNPDSYNGAIRENYIWSQDYTDLEVRVPVPKHVMKGKQVSVALSSGTIRVAMVEENGERVLMEGKLTHKINTESSLWSLEPGRCVLVNLSKVGEYWWSAILEGEEPIDIDKINKERSMATVDEEEQAVLDRLTFDYHQKLQGKPQSHELKVHEMLKKGWDAEGSPFRGQRFDPAMFNISPGAVQF.

Residues 120-143 (AADLSGPQEVEKEEPPGSQDPEHT) are disordered. The span at 128-143 (EVEKEEPPGSQDPEHT) shows a compositional bias: basic and acidic residues. One can recognise a CS domain in the interval 187–279 (AIRENYIWSQ…VGEYWWSAIL (93 aa)). Phosphoserine is present on residues Ser-342 and Ser-357.

The polypeptide is NudC domain-containing protein 3 (Nudcd3) (Mus musculus (Mouse)).